The chain runs to 227 residues: Zeamatin (227 aa).

Residues 1-20 (MAGSVAIVGIFVALLAVAGE) form the signal peptide. Intrachain disulfides connect C30-C226, C72-C82, C87-C93, C139-C215, C145-C198, C153-C163, C167-C176, and C177-C185.

Belongs to the thaumatin family.

In terms of biological role, has antifungal activity. Inhibits Candida albicans and Trichoderma reesei; marginal inhibition observed against Alternaria solani and Neurospora crassa. The polypeptide is Zeamatin (Zlp) (Zea mays (Maize)).